Consider the following 384-residue polypeptide: Secreted LysM effector LysM14 (384 aa).

The signal sequence occupies residues 1-35; the sequence is MGWSPRWKVMLRGIFNAMISIHILLSLLFAHIATA. The LysM domain maps to 64-112; it reads YTYTIQEGDTCAKLAQRYQVTTSNIETWNVGSWGWPGCAKIKQGDFVCL. Positions 185–220 are disordered; the sequence is STTKSAASKTTTTSNPTTTSKTTITSKPTTTSKPTT.

Belongs to the secreted LysM effector family.

It localises to the secreted. Secreted LysM effector that might have a role in sequestration of chitin oligosaccharides (breakdown products of fungal cell walls that are released during invasion and act as triggers of host immunity) to dampen host defense. The chain is Secreted LysM effector LysM14 from Penicillium expansum (Blue mold rot fungus).